A 348-amino-acid polypeptide reads, in one-letter code: Phenylalanine--tRNA ligase alpha subunit (348 aa).

Glu259 serves as a coordination point for Mg(2+).

It belongs to the class-II aminoacyl-tRNA synthetase family. Phe-tRNA synthetase alpha subunit type 1 subfamily. Tetramer of two alpha and two beta subunits. The cofactor is Mg(2+).

It localises to the cytoplasm. It catalyses the reaction tRNA(Phe) + L-phenylalanine + ATP = L-phenylalanyl-tRNA(Phe) + AMP + diphosphate + H(+). In Ligilactobacillus salivarius (strain UCC118) (Lactobacillus salivarius), this protein is Phenylalanine--tRNA ligase alpha subunit.